We begin with the raw amino-acid sequence, 753 residues long: Catalase-peroxidase (753 aa).

Positions 90–238 (WHSAGTYRVT…LASSHMGLIY (149 aa)) form a cross-link, tryptophyl-tyrosyl-methioninium (Trp-Tyr) (with M-264). Histidine 91 functions as the Proton acceptor in the catalytic mechanism. Residues 196-220 (SEGQEGHEGHGVVQGDESKKQHTDI) form a disordered region. The segment at residues 238–264 (YVNPEGPDGIPDPVASAKDIRVTFGRM) is a cross-link (tryptophyl-tyrosyl-methioninium (Tyr-Met) (with W-90)). Histidine 279 is a binding site for heme b.

This sequence belongs to the peroxidase family. Peroxidase/catalase subfamily. Homodimer or homotetramer. Requires heme b as cofactor. Formation of the three residue Trp-Tyr-Met cross-link is important for the catalase, but not the peroxidase activity of the enzyme.

It localises to the cytoplasm. The catalysed reaction is H2O2 + AH2 = A + 2 H2O. It carries out the reaction 2 H2O2 = O2 + 2 H2O. Its activity is regulated as follows. Inhibited by KCN. Functionally, bifunctional enzyme with both catalase and broad-spectrum peroxidase activity. This Neurospora crassa (strain ATCC 24698 / 74-OR23-1A / CBS 708.71 / DSM 1257 / FGSC 987) protein is Catalase-peroxidase.